The following is a 242-amino-acid chain: NLP effector protein 8 (242 aa).

Residues 1 to 17 (MHLTVFYLVALCTFASA) form the signal peptide. The Conserved undecapeptide motif motif lies at 108–118 (AIMYAWYFPRD). The Conserved heptapeptide motif signature appears at 127 to 133 (GHRNAWE). N-linked (GlcNAc...) asparagine glycosylation is present at Asn206.

This sequence belongs to the Necrosis inducing protein (NPP1) family.

It is found in the secreted. Its function is as follows. Probable secreted effector that may act as a pathogen-associated molecular pattern (PAMP) recognized by the plant immune system. The chain is NLP effector protein 8 from Plasmopara viticola (Downy mildew of grapevine).